Consider the following 571-residue polypeptide: Protein PNS1 (571 aa).

Residues 1 to 96 are disordered; the sequence is MNDEEKHLAA…PDFPPDYNYK (96 aa). The Cytoplasmic segment spans residues 1–118; that stretch reads MNDEEKHLAA…AVPKPKWNDK (118 aa). The span at 15-31 shows a compositional bias: polar residues; it reads YQPNMHYQQQQEKQTGY. Composition is skewed to low complexity over residues 39–52 and 71–80; these read QGGYNQNQNQDYYN and GNPNDNYNNQ. Residues 81 to 90 are compositionally biased toward pro residues; that stretch reads QPPPYTPDFP. Residues 119-139 traverse the membrane as a helical segment; that stretch reads IGLVILALIFSGYLALSIIVI. At 140–166 the chain is on the extracellular side; it reads RAYAQTHSFQGWGIYSGENDYSLNTHT. A helical transmembrane segment spans residues 167–187; that stretch reads LILYAFVLATAMVLSLLYFIA. Residues 188–189 are Cytoplasmic-facing; that stretch reads AR. A helical membrane pass occupies residues 190 to 210; it reads VWTKQFIWITYILHLLFSWGT. Position 211 (Ala-211) is a topological domain, extracellular. A helical membrane pass occupies residues 212 to 232; that stretch reads IYYLVVGYYSAGIVFIVFAAL. Over 233–263 the chain is Cytoplasmic; sequence TTWWFWCSRKRIPFATIVLQTLIDVTRANPS. A helical membrane pass occupies residues 264–284; the sequence is VLVISAVGTVVGACFGTWFSF. Topologically, residues 285 to 311 are extracellular; that stretch reads TIVSIYVKYDPDNRNPGCMTTGGSCSN. The chain crosses the membrane as a helical span at residues 312 to 332; the sequence is GKLIGLILFAIFCGYYLTEVI. The Cytoplasmic segment spans residues 333 to 369; that stretch reads KNVIHVTISGVYGSWYYCSKSDQGMPKHAAMSSFRRA. The helical transmembrane segment at 370–390 threads the bilayer; it reads VTYSLGSISLGSLIVSIINFI. The Extracellular portion of the chain corresponds to 391–406; that stretch reads RQILSVLQQDARQSGD. Residues 407-427 traverse the membrane as a helical segment; sequence TLATVLLCFVQCCFGVLDWLV. At 428–472 the chain is on the cytoplasmic side; that stretch reads TYFNHYAYSYIALYGKAYVPSAKATWKLMQTRGIDAMVNDSLIGS. A helical membrane pass occupies residues 473 to 493; it reads VLSFGASFVAYAAALVAYCFL. The Extracellular segment spans residues 494 to 503; it reads KYTDPSYNSG. Residues 504-524 traverse the membrane as a helical segment; sequence GGFYAPVVGLAFVIALQVSNI. Residues 525–571 are Cytoplasmic-facing; it reads TNVSLKSGCSTFFLALARDPEVLRVSYPQIYEEICRTYPPARDKLDI.

The protein belongs to the CTL (choline transporter-like) family.

It localises to the cell membrane. Functionally, probably involved in transport through the plasma membrane. This is Protein PNS1 (PNS1) from Yarrowia lipolytica (strain CLIB 122 / E 150) (Yeast).